The following is a 300-amino-acid chain: Merozoite surface protein 2 (300 aa).

A signal peptide spans 1–20 (MKVIKTLSIINFFIFVTFNI). Residues Asn-22 and Asn-36 are each glycosylated (N-linked (GlcNAc...) asparagine). Positions 44 to 226 (EESKPPTGAV…EQTESPELQS (183 aa)) are polymorphic region. The stretch at 51-58 (GAVAGSGA) is one 1; inverted repeat. The segment at 51-110 (GAVAGSGAGAGSGAGAVAGSGAGAVAGSGAGAVAGSGAGAVAGSGAGAVAGSGAVAGSGA) is 7 X 8 AA tandem repeats of G-S-G-A-G-A-V-A. 5 consecutive repeat copies span residues 61–68 (GSGAGAVA), 69–76 (GSGAGAVA), 77–84 (GSGAGAVA), 85–92 (GSGAGAVA), and 93–100 (GSGAGAVA). Residues 103–110 (GAVAGSGA) form a 7; inverted repeat. Residues 111–261 (GNGANPGADA…DSQKECTDGN (151 aa)) form a disordered region. Low complexity predominate over residues 123 to 148 (SPSTPATTTTTTTTNDAEASTSTSSE). The segment covering 149–165 (NRNHNNAETNPKGKGEV) has biased composition (basic and acidic residues). 2 stretches are compositionally biased toward polar residues: residues 167–193 (KPNQ…NVPR) and 200–228 (KSPT…QSAP). Residue Asn-177 is glycosylated (N-linked (GlcNAc...) asparagine). Residue Asn-249 is glycosylated (N-linked (GlcNAc...) asparagine). A disulfide bridge links Cys-257 with Cys-265. N-linked (GlcNAc...) asparagine glycans are attached at residues Asn-273 and Asn-274. Asn-274 carries the GPI-anchor amidated asparagine lipid modification. Residues 275–300 (SSNIASINKFVVLISATLVLSFAIFI) constitute a propeptide, removed in mature form.

It is found in the cell membrane. May play a role in the merozoite attachment to the erythrocyte. In Plasmodium falciparum (isolate imr143), this protein is Merozoite surface protein 2.